Consider the following 165-residue polypeptide: Large ribosomal subunit protein uL11 (165 aa).

This sequence belongs to the universal ribosomal protein uL11 family.

Its function is as follows. Binds directly to 26S ribosomal RNA. The protein is Large ribosomal subunit protein uL11 (rpl-12) of Caenorhabditis briggsae.